Here is a 611-residue protein sequence, read N- to C-terminus: Dolabella-3,7-dien-18-ol synthase TPS06 (611 aa).

The Mg(2+) site is built by D363, D367, D507, T511, and E515. Residues D363 to D367 carry the DDXXD motif; degenerate motif.

This sequence belongs to the terpene synthase family. Tpsa subfamily. Mg(2+) is required as a cofactor. The cofactor is Mn(2+). Predominantly expressed in flowers but also in stems, siliques, roots and leaves.

It localises to the cytoplasm. It catalyses the reaction (2E,6E,10E)-geranylgeranyl diphosphate + H2O = (3E,7E)-dolabella-3,7-dien-18-ol + diphosphate. It functions in the pathway secondary metabolite biosynthesis; terpenoid biosynthesis. In terms of biological role, involved in terpene biosynthesis in roots. Possesses sesquiterpene (C15) synthase activity and diterpene (C20) synthase activity in vitro. Possesses dolabella-3,7-dien-18-ol synthase activity in vitro. Catalyzes the formation of dolabella-3,7-dien-18-ol from geranylgeranyl diphosphate. The chain is Dolabella-3,7-dien-18-ol synthase TPS06 from Arabidopsis thaliana (Mouse-ear cress).